Consider the following 327-residue polypeptide: tRNA dimethylallyltransferase (327 aa).

14–21 is an ATP binding site; the sequence is GPTASGKT. 16 to 21 contacts substrate; sequence TASGKT. 2 interaction with substrate tRNA regions span residues 39 to 42 and 163 to 167; these read DSAL and QRIQR.

This sequence belongs to the IPP transferase family. As to quaternary structure, monomer. Mg(2+) serves as cofactor.

It catalyses the reaction adenosine(37) in tRNA + dimethylallyl diphosphate = N(6)-dimethylallyladenosine(37) in tRNA + diphosphate. In terms of biological role, catalyzes the transfer of a dimethylallyl group onto the adenine at position 37 in tRNAs that read codons beginning with uridine, leading to the formation of N6-(dimethylallyl)adenosine (i(6)A). The chain is tRNA dimethylallyltransferase from Xanthomonas oryzae pv. oryzae (strain PXO99A).